The primary structure comprises 97 residues: Large ribosomal subunit protein bL28 (97 aa).

Belongs to the bacterial ribosomal protein bL28 family.

The protein is Large ribosomal subunit protein bL28 of Sphingopyxis alaskensis (strain DSM 13593 / LMG 18877 / RB2256) (Sphingomonas alaskensis).